A 612-amino-acid polypeptide reads, in one-letter code: Sulfite reductase [NADPH] hemoprotein beta-component (612 aa).

A disordered region spans residues 1-26; it reads MDDHKPIETPDGPAVDTPGIGARRYE. The [4Fe-4S] cluster site is built by Cys-469, Cys-475, Cys-514, and Cys-518. Residue Cys-518 participates in siroheme binding.

The protein belongs to the nitrite and sulfite reductase 4Fe-4S domain family. As to quaternary structure, alpha(8)-beta(8). The alpha component is a flavoprotein, the beta component is a hemoprotein. The cofactor is siroheme. [4Fe-4S] cluster is required as a cofactor.

The enzyme catalyses hydrogen sulfide + 3 NADP(+) + 3 H2O = sulfite + 3 NADPH + 4 H(+). The protein operates within sulfur metabolism; hydrogen sulfide biosynthesis; hydrogen sulfide from sulfite (NADPH route): step 1/1. In terms of biological role, component of the sulfite reductase complex that catalyzes the 6-electron reduction of sulfite to sulfide. This is one of several activities required for the biosynthesis of L-cysteine from sulfate. The protein is Sulfite reductase [NADPH] hemoprotein beta-component of Methylorubrum extorquens (strain ATCC 14718 / DSM 1338 / JCM 2805 / NCIMB 9133 / AM1) (Methylobacterium extorquens).